Reading from the N-terminus, the 505-residue chain is Maturase K (505 aa).

It belongs to the intron maturase 2 family. MatK subfamily.

It localises to the plastid. The protein resides in the chloroplast. In terms of biological role, usually encoded in the trnK tRNA gene intron. Probably assists in splicing its own and other chloroplast group II introns. The polypeptide is Maturase K (Kunzea ericoides (White teatree)).